The primary structure comprises 184 residues: dCTP deaminase (184 aa).

Residues 107-112, 131-133, Q152, Y166, and Q176 each bind dCTP; these read KSTYAR and TLE. E133 acts as the Proton donor/acceptor in catalysis.

The protein belongs to the dCTP deaminase family. In terms of assembly, homotrimer.

It carries out the reaction dCTP + H2O + H(+) = dUTP + NH4(+). It functions in the pathway pyrimidine metabolism; dUMP biosynthesis; dUMP from dCTP (dUTP route): step 1/2. Functionally, catalyzes the deamination of dCTP to dUTP. The protein is dCTP deaminase of Paramagnetospirillum magneticum (strain ATCC 700264 / AMB-1) (Magnetospirillum magneticum).